A 206-amino-acid chain; its full sequence is Ribosomal RNA small subunit methyltransferase G (206 aa).

Residues glycine 74, leucine 79, 125–126 (VE), and arginine 140 each bind S-adenosyl-L-methionine.

This sequence belongs to the methyltransferase superfamily. RNA methyltransferase RsmG family.

The protein localises to the cytoplasm. The catalysed reaction is guanosine(527) in 16S rRNA + S-adenosyl-L-methionine = N(7)-methylguanosine(527) in 16S rRNA + S-adenosyl-L-homocysteine. Functionally, specifically methylates the N7 position of guanine in position 527 of 16S rRNA. The polypeptide is Ribosomal RNA small subunit methyltransferase G (Shewanella frigidimarina (strain NCIMB 400)).